Here is a 736-residue protein sequence, read N- to C-terminus: 1,4-alpha-glucan branching enzyme GlgB 2 (736 aa).

Catalysis depends on D415, which acts as the Nucleophile. E468 acts as the Proton donor in catalysis.

It belongs to the glycosyl hydrolase 13 family. GlgB subfamily. As to quaternary structure, monomer.

The enzyme catalyses Transfers a segment of a (1-&gt;4)-alpha-D-glucan chain to a primary hydroxy group in a similar glucan chain.. It functions in the pathway glycan biosynthesis; glycogen biosynthesis. In terms of biological role, catalyzes the formation of the alpha-1,6-glucosidic linkages in glycogen by scission of a 1,4-alpha-linked oligosaccharide from growing alpha-1,4-glucan chains and the subsequent attachment of the oligosaccharide to the alpha-1,6 position. The protein is 1,4-alpha-glucan branching enzyme GlgB 2 of Rhizobium johnstonii (strain DSM 114642 / LMG 32736 / 3841) (Rhizobium leguminosarum bv. viciae).